We begin with the raw amino-acid sequence, 307 residues long: Putative gluconeogenesis factor (307 aa).

The protein belongs to the gluconeogenesis factor family.

It localises to the cytoplasm. Required for morphogenesis under gluconeogenic growth conditions. The chain is Putative gluconeogenesis factor from Yersinia pestis.